We begin with the raw amino-acid sequence, 518 residues long: Arrestin-related trafficking adapter 10 (518 aa).

A Glycyl lysine isopeptide (Lys-Gly) (interchain with G-Cter in ubiquitin) cross-link involves residue Lys118.

Belongs to the ART10 family. As to quaternary structure, interacts with RSP5. In terms of processing, ubiquitinated by RSP5.

It localises to the cytoplasm. May regulate endocytosis by recruiting RSP5 ubiquitin ligase activity to specific plasma membrane proteins in response to extracellular stimuli. This is Arrestin-related trafficking adapter 10 (ART10) from Saccharomyces cerevisiae (strain Lalvin EC1118 / Prise de mousse) (Baker's yeast).